The primary structure comprises 99 residues: Small ribosomal subunit protein bS18 (99 aa).

Positions 1–25 (MAESKGRPGSASQRPTGGDKAIAGQ) are disordered.

It belongs to the bacterial ribosomal protein bS18 family. Part of the 30S ribosomal subunit. Forms a tight heterodimer with protein bS6.

Its function is as follows. Binds as a heterodimer with protein bS6 to the central domain of the 16S rRNA, where it helps stabilize the platform of the 30S subunit. The chain is Small ribosomal subunit protein bS18 from Solibacter usitatus (strain Ellin6076).